The primary structure comprises 66 residues: Large ribosomal subunit protein bL35 (66 aa).

Basic residues-rich tracts occupy residues 1–15 (MSKL…KRFK) and 22–43 (ILHK…RKRR). A disordered region spans residues 1–43 (MSKLKTRSSAAKRFKVTATGKILHKKAGKRHNLSKKSESRKRR).

This sequence belongs to the bacterial ribosomal protein bL35 family.

This chain is Large ribosomal subunit protein bL35, found in Dictyoglomus turgidum (strain DSM 6724 / Z-1310).